Here is a 398-residue protein sequence, read N- to C-terminus: CCA-adding enzyme (398 aa).

Gly-32 and Arg-35 together coordinate ATP. 2 residues coordinate CTP: Gly-32 and Arg-35. Mg(2+) is bound by residues Asp-45 and Asp-47. ATP-binding residues include Arg-116, Asp-159, Arg-162, Arg-165, and Arg-168. CTP contacts are provided by Arg-116, Asp-159, Arg-162, Arg-165, and Arg-168.

This sequence belongs to the tRNA nucleotidyltransferase/poly(A) polymerase family. Bacterial CCA-adding enzyme type 3 subfamily. As to quaternary structure, homodimer. Requires Mg(2+) as cofactor.

It carries out the reaction a tRNA precursor + 2 CTP + ATP = a tRNA with a 3' CCA end + 3 diphosphate. It catalyses the reaction a tRNA with a 3' CCA end + 2 CTP + ATP = a tRNA with a 3' CCACCA end + 3 diphosphate. Its function is as follows. Catalyzes the addition and repair of the essential 3'-terminal CCA sequence in tRNAs without using a nucleic acid template. Adds these three nucleotides in the order of C, C, and A to the tRNA nucleotide-73, using CTP and ATP as substrates and producing inorganic pyrophosphate. tRNA 3'-terminal CCA addition is required both for tRNA processing and repair. Also involved in tRNA surveillance by mediating tandem CCA addition to generate a CCACCA at the 3' terminus of unstable tRNAs. While stable tRNAs receive only 3'-terminal CCA, unstable tRNAs are marked with CCACCA and rapidly degraded. This is CCA-adding enzyme from Lacticaseibacillus paracasei (strain ATCC 334 / BCRC 17002 / CCUG 31169 / CIP 107868 / KCTC 3260 / NRRL B-441) (Lactobacillus paracasei).